We begin with the raw amino-acid sequence, 250 residues long: Deoxynucleoside kinase (250 aa).

G27–T35 provides a ligand contact to ATP. Substrate-binding residues include E52, Y70, and Q81. E104 (proton acceptor) is an active-site residue. Residues R105 and E172 each coordinate substrate. Phosphoserine is present on residues S236, S241, and S243.

It belongs to the DCK/DGK family. Monomer.

The enzyme catalyses a 2'-deoxyribonucleoside + ATP = a 2'-deoxyribonucleoside 5'-phosphate + ADP + H(+). With respect to regulation, subject to feedback inhibition by dTTP. In terms of biological role, deoxyribonucleoside kinase that has a broad specificity phosphorylating thymidine, 2'-deoxyriboadenosine, 2'-deoxyribocytidine and 2'-deoxyriboguanosine. Specificity is higher for pyrimidine nucleosides. Several anti-viral and anti-cancer nucleoside analogs are also efficiently phosphorylated. In Drosophila melanogaster (Fruit fly), this protein is Deoxynucleoside kinase (dnk).